Consider the following 60-residue polypeptide: Small ribosomal subunit protein bS21 (60 aa).

Residues 41–60 are disordered; it reads PEEKRKRKAIARRRQRSRRR. The segment covering 45–60 has biased composition (basic residues); that stretch reads RKRKAIARRRQRSRRR.

Belongs to the bacterial ribosomal protein bS21 family.

The polypeptide is Small ribosomal subunit protein bS21 (Gloeothece citriformis (strain PCC 7424) (Cyanothece sp. (strain PCC 7424))).